The primary structure comprises 272 residues: Undecaprenyl-diphosphatase (272 aa).

The next 7 helical transmembrane spans lie at 2–22, 43–63, 82–102, 110–130, 185–205, 224–244, and 252–272; these read FDIIKAVIIGIVEGLTEFLPI, FISMFEYVIQFGAILAVVLLY, WQLWAKVIIAVLPSAVVGLPL, LHTPIVVATTLIVYGILFIIL, YVATEFSFFLAIPTMVGVLII, VLMTGSIVSFLVAIVAIKWLL, and FKPFGWYRIALGAIVLLVMFI.

Belongs to the UppP family.

It is found in the cell membrane. The enzyme catalyses di-trans,octa-cis-undecaprenyl diphosphate + H2O = di-trans,octa-cis-undecaprenyl phosphate + phosphate + H(+). In terms of biological role, catalyzes the dephosphorylation of undecaprenyl diphosphate (UPP). Confers resistance to bacitracin. In Lacticaseibacillus casei (strain BL23) (Lactobacillus casei), this protein is Undecaprenyl-diphosphatase.